The following is a 103-amino-acid chain: Large ribosomal subunit protein bL21 (103 aa).

It belongs to the bacterial ribosomal protein bL21 family. In terms of assembly, part of the 50S ribosomal subunit. Contacts protein L20.

In terms of biological role, this protein binds to 23S rRNA in the presence of protein L20. The sequence is that of Large ribosomal subunit protein bL21 from Idiomarina loihiensis (strain ATCC BAA-735 / DSM 15497 / L2-TR).